The following is a 111-amino-acid chain: Photosystem II reaction center Psb28 protein (111 aa).

Belongs to the Psb28 family. Part of the photosystem II complex.

The protein localises to the cellular thylakoid membrane. This is Photosystem II reaction center Psb28 protein from Nostoc sp. (strain PCC 7120 / SAG 25.82 / UTEX 2576).